We begin with the raw amino-acid sequence, 237 residues long: tRNA (guanine-N(7)-)-methyltransferase (237 aa).

S-adenosyl-L-methionine-binding residues include E68, E93, D120, and D143. D143 is a catalytic residue. Substrate contacts are provided by residues K147, D179, and 216 to 219 (TKFE).

It belongs to the class I-like SAM-binding methyltransferase superfamily. TrmB family.

The enzyme catalyses guanosine(46) in tRNA + S-adenosyl-L-methionine = N(7)-methylguanosine(46) in tRNA + S-adenosyl-L-homocysteine. The protein operates within tRNA modification; N(7)-methylguanine-tRNA biosynthesis. Its function is as follows. Catalyzes the formation of N(7)-methylguanine at position 46 (m7G46) in tRNA. This chain is tRNA (guanine-N(7)-)-methyltransferase, found in Shewanella pealeana (strain ATCC 700345 / ANG-SQ1).